A 227-amino-acid chain; its full sequence is (S)-2-haloacid dehalogenase (227 aa).

Asp-10 acts as the Nucleophile in catalysis. Residues 11-12 (LY), Arg-41, and 118-119 (SN) contribute to the an (S)-2-haloacid site. Residues 175 to 180 (SSNAWD) are important for catalytic activity.

This sequence belongs to the HAD-like hydrolase superfamily. S-2-haloalkanoic acid dehalogenase family.

It catalyses the reaction an (S)-2-haloacid + H2O = a (2R)-2-hydroxycarboxylate + a halide anion + H(+). The enzyme catalyses (S)-2-chloropropanoate + H2O = (R)-lactate + chloride + H(+). In terms of biological role, catalyzes the hydrolytic dehalogenation of small (S)-2-haloalkanoic acids to yield the corresponding (R)-2-hydroxyalkanoic acids. Acts on acids of short chain lengths, C(2) to C(4), with inversion of configuration at C-2. Active with 2-halogenated carboxylic acids and converts only the S-isomer (or L-isomer) of 2-chloropropionic acid with inversion of configuration to produce R-lactate (or D-isomer). The polypeptide is (S)-2-haloacid dehalogenase (dhl VII) (Pseudomonas fluorescens).